A 190-amino-acid chain; its full sequence is Potassium-transporting ATPase KdpC subunit (190 aa).

The chain crosses the membrane as a helical span at residues 10–30 (TFLFLLLITGGVYPLLTTALG).

This sequence belongs to the KdpC family. In terms of assembly, the system is composed of three essential subunits: KdpA, KdpB and KdpC.

Its subcellular location is the cell inner membrane. Functionally, part of the high-affinity ATP-driven potassium transport (or Kdp) system, which catalyzes the hydrolysis of ATP coupled with the electrogenic transport of potassium into the cytoplasm. This subunit acts as a catalytic chaperone that increases the ATP-binding affinity of the ATP-hydrolyzing subunit KdpB by the formation of a transient KdpB/KdpC/ATP ternary complex. In Shigella flexneri serotype 5b (strain 8401), this protein is Potassium-transporting ATPase KdpC subunit.